A 547-amino-acid polypeptide reads, in one-letter code: MAAKEVKFGDSARKKMLVGVNVLADAVKATLGPKGRNVVLDKSFGAPTITKDGVSVAKEIELKDKFENMGAQLVKDVASKANDAAGDGTTTATVLAQAIVNEGLKAVAAGMNPMDLKRGIDKATVAIVAQLKELAKPCADTKAIAQVGTISANSDESIGQIIAEAMEKVGKEGVITVEEGSGLENELSVVEGMQFDRGYLSPYFVNKPDTMAAELDSPLLLLVDKKISNIREMLPVLEAVAKAGRPLLIVAEDVEGEALATLVVNNMRGIVKVAAVKAPGFGDRRKAMLQDIAILTGGTVISEEVGLSLEGATLEHLGNAKRVVINKENTTIIDGAGVQADIEARVLQIRKQIEETTSDYDREKLQERLAKLAGGVAVIKVGAATEVEMKEKKARVEDALHATRAAVEEGVVPGGGVALVRALQAIEGLKGDNEEQNVGIALLRRAVEAPLRQIVANAGDEPSVVVDKVKQGSGNYGFNAATGVYGDMIEMGILDPAKVTRSALQAAASIGGLMITTEAMVAEIVEDKPAMGGMPDMGGMGGMGGMM.

Residues 30–33 (TLGP), Lys51, 87–91 (DGTTT), Gly415, 479–481 (NAA), and Asp495 each bind ATP.

Belongs to the chaperonin (HSP60) family. Forms a cylinder of 14 subunits composed of two heptameric rings stacked back-to-back. Interacts with the co-chaperonin GroES.

It localises to the cytoplasm. It catalyses the reaction ATP + H2O + a folded polypeptide = ADP + phosphate + an unfolded polypeptide.. Its function is as follows. Together with its co-chaperonin GroES, plays an essential role in assisting protein folding. The GroEL-GroES system forms a nano-cage that allows encapsulation of the non-native substrate proteins and provides a physical environment optimized to promote and accelerate protein folding. The polypeptide is Chaperonin GroEL (Pseudomonas paraeruginosa (strain DSM 24068 / PA7) (Pseudomonas aeruginosa (strain PA7))).